Here is a 756-residue protein sequence, read N- to C-terminus: Protease KEX1 (756 aa).

A signal peptide spans 1 to 24 (MILSSQLMLALIAVSGYGKAMQVP). N-linked (GlcNAc...) asparagine glycosylation is found at N121, N144, and N152. Residues 130–440 (QWHLINPNYP…FGKLDAYNIV (311 aa)) form the Peptidase S8 domain. Active-site charge relay system residues include D164 and H202. Disulfide bonds link C218–C365 and C310–C340. S373 serves as the catalytic Charge relay system. 2 N-linked (GlcNAc...) asparagine glycosylation sites follow: N392 and N538. Residues 449–583 (VNPQGWLYLP…RLKMFGETID (135 aa)) enclose the P/Homo B domain. The segment at 599 to 632 (AEVKSTESKTTTPTAQTSSFTTTSGEETSGANKL) is disordered. Low complexity predominate over residues 606–628 (SKTTTPTAQTSSFTTTSGEETSG). A helical membrane pass occupies residues 641–661 (LYLAIFVIGAIVIIIYYLFFL). Positions 715 to 756 (EEELSPRESSSNNPFGNESLESFDNSPDHTSNLLGQNSIPNK) are disordered. Residues 721–756 (RESSSNNPFGNESLESFDNSPDHTSNLLGQNSIPNK) show a composition bias toward polar residues.

Belongs to the peptidase S8 family. Furin subfamily. Ca(2+) is required as a cofactor.

It localises to the membrane. Probably involved in the processing of the precursor of m1-toxin and alpha-factor. The protein is Protease KEX1 (KEX1) of Kluyveromyces lactis (strain ATCC 8585 / CBS 2359 / DSM 70799 / NBRC 1267 / NRRL Y-1140 / WM37) (Yeast).